Reading from the N-terminus, the 391-residue chain is Origin recognition complex subunit 2 (391 aa).

Residues 1-43 are disordered; it reads MEEYTDSGEDKNVYSDDDNDYFTASTQNNRTSKNTDSSPLDPK. Residues 22–38 are compositionally biased toward polar residues; sequence FTASTQNNRTSKNTDSS.

It belongs to the ORC2 family. In terms of assembly, ORC is composed of six subunits.

Its subcellular location is the nucleus. Component of the origin recognition complex (ORC) that binds origins of replication. DNA-binding is ATP-dependent, however specific DNA sequences that define origins of replication have not been identified so far. ORC is required to assemble the pre-replication complex necessary to initiate DNA replication. The chain is Origin recognition complex subunit 2 (orcB) from Dictyostelium discoideum (Social amoeba).